Here is a 155-residue protein sequence, read N- to C-terminus: Protein SprT-like (155 aa).

One can recognise a SprT-like domain in the interval 7–145; it reads QRHMEEVSLQ…GSCGGKLIQT (139 aa). His67 contributes to the Zn(2+) binding site. The active site involves Glu68. Residue His71 coordinates Zn(2+).

The protein belongs to the SprT family. Zn(2+) is required as a cofactor.

It localises to the cytoplasm. This is Protein SprT-like from Listeria monocytogenes serovar 1/2a (strain ATCC BAA-679 / EGD-e).